Here is a 303-residue protein sequence, read N- to C-terminus: Diaminopimelate epimerase (303 aa).

Positions 15, 47, and 67 each coordinate substrate. Catalysis depends on C76, which acts as the Proton donor. Residues 77–78 (GN), N163, N197, and 215–216 (ER) each bind substrate. C224 acts as the Proton acceptor in catalysis. Substrate is bound at residue 225-226 (GS).

Belongs to the diaminopimelate epimerase family. As to quaternary structure, homodimer.

The protein resides in the cytoplasm. The catalysed reaction is (2S,6S)-2,6-diaminopimelate = meso-2,6-diaminopimelate. It participates in amino-acid biosynthesis; L-lysine biosynthesis via DAP pathway; DL-2,6-diaminopimelate from LL-2,6-diaminopimelate: step 1/1. In terms of biological role, catalyzes the stereoinversion of LL-2,6-diaminopimelate (L,L-DAP) to meso-diaminopimelate (meso-DAP), a precursor of L-lysine and an essential component of the bacterial peptidoglycan. This is Diaminopimelate epimerase from Allorhizobium ampelinum (strain ATCC BAA-846 / DSM 112012 / S4) (Agrobacterium vitis (strain S4)).